The chain runs to 227 residues: UPF0758 protein lpl2409 (227 aa).

Positions 102–225 (RLSNTQQTYA…YSIFAENKWA (124 aa)) constitute an MPN domain. The Zn(2+) site is built by His173, His175, and Asp186. A JAMM motif motif is present at residues 173 to 186 (HNHPSGLSDASQQD).

The protein belongs to the UPF0758 family.

This chain is UPF0758 protein lpl2409, found in Legionella pneumophila (strain Lens).